A 388-amino-acid chain; its full sequence is Chorismate synthase (388 aa).

Positions 39 and 45 each coordinate NADP(+). Residues 130-132 (RSS), 251-252 (NA), Gly296, 311-315 (KPIPT), and Arg337 each bind FMN.

It belongs to the chorismate synthase family. Homotetramer. It depends on FMNH2 as a cofactor.

The catalysed reaction is 5-O-(1-carboxyvinyl)-3-phosphoshikimate = chorismate + phosphate. Its pathway is metabolic intermediate biosynthesis; chorismate biosynthesis; chorismate from D-erythrose 4-phosphate and phosphoenolpyruvate: step 7/7. In terms of biological role, catalyzes the anti-1,4-elimination of the C-3 phosphate and the C-6 proR hydrogen from 5-enolpyruvylshikimate-3-phosphate (EPSP) to yield chorismate, which is the branch point compound that serves as the starting substrate for the three terminal pathways of aromatic amino acid biosynthesis. This reaction introduces a second double bond into the aromatic ring system. This Streptococcus pneumoniae (strain 70585) protein is Chorismate synthase.